A 637-amino-acid polypeptide reads, in one-letter code: MNTGIIDLFDNHVDSIPTILPHQLATLDYLVRTIIDENRSVLLFHIMGSGKTIIALLFALVASRFKKVYILVPNINILKIFNYNMGVAMNLFNDEFIAENIFIHSTTSFYSLNYNDNVINYNGLSRYNNSIFIVDEAHNIFGNNTGELMTVIKNKNKIPFLLLSGSPITNTPNTLGHIIDLMSEETIDFGEIISRGKKVIQTLLNERGVNVLKDLLKGRISYYEMPDKDLPTIRYHGRKFLDTRVVYCHMSKLQERDYMITRRQLCYHEMFDKNMYNVSMAVLGQLNLMNNLDTLFQEQDKELYPNLKINNGVLYGEELVTLNISSKFKYFINRIQTLNGKHFIYFSNSTYGGLVIKYIMLSNGYSEYNGSQGTNPHMINGKPKTFAIVTSKMKSSLEDLLDVYNSPENDDGSQLMFLFSSNIMSESYTLKEVRHIWFMTIPDTFSQYNQILGRSIRKFSYADISEPVNVYLLAAVYSDFNDEVTSLNDYTQDELINVLPFDIKKLLYLKFKTKETNRIYSILQEMSETYSLPPHPSIVKVLLGELVRQFFYNNSRIKYNDTKLLKMVTSVIKNKEDARNYIDDIVNGHFFVSNKVFDKSLLYKYENDIITVPFRLSYEPFVWGVNFRKEYNVVSSP.

In terms of domain architecture, Helicase ATP-binding spans 32–185 (RTIIDENRSV…GHIIDLMSEE (154 aa)). 45-52 (HIMGSGKT) serves as a coordination point for ATP. Positions 135–138 (DEAH) match the DEXH box motif. Residues 327–507 (KFKYFINRIQ…VLPFDIKKLL (181 aa)) form the Helicase C-terminal domain.

Belongs to the helicase family. VETF subfamily. In terms of assembly, heterodimer of a 70 kDa and a 82 kDa subunit. Part of the early transcription complex composed of ETF, RAP94/OPG109, and the DNA-directed RNA polymerase.

It localises to the virion. In terms of biological role, acts with RNA polymerase to initiate transcription from early gene promoters. Is recruited by the RPO-associated protein of 94 kDa RAP94/OPG109 to form the early transcription complex, which also contains the core RNA polymerase. ETF heterodimer binds to early gene promoters. This is Early transcription factor 70 kDa subunit (OPG118) from Vaccinia virus (strain Ankara) (VACV).